A 450-amino-acid polypeptide reads, in one-letter code: 3-phosphoshikimate 1-carboxyvinyltransferase (450 aa).

Positions 23, 24, and 28 each coordinate 3-phosphoshikimate. K23 lines the phosphoenolpyruvate pocket. Phosphoenolpyruvate-binding residues include G96 and R124. The 3-phosphoshikimate site is built by S167, S168, Q169, S196, E311, and H340. Q169 is a phosphoenolpyruvate binding site. E311 acts as the Proton acceptor in catalysis. Residues R344, R385, and K410 each coordinate phosphoenolpyruvate. The interval 426 to 450 (GQGWGYPQPRSGQRARRATGQGSGG) is disordered.

It belongs to the EPSP synthase family. Monomer.

It localises to the cytoplasm. It catalyses the reaction 3-phosphoshikimate + phosphoenolpyruvate = 5-O-(1-carboxyvinyl)-3-phosphoshikimate + phosphate. The protein operates within metabolic intermediate biosynthesis; chorismate biosynthesis; chorismate from D-erythrose 4-phosphate and phosphoenolpyruvate: step 6/7. Its function is as follows. Catalyzes the transfer of the enolpyruvyl moiety of phosphoenolpyruvate (PEP) to the 5-hydroxyl of shikimate-3-phosphate (S3P) to produce enolpyruvyl shikimate-3-phosphate and inorganic phosphate. The chain is 3-phosphoshikimate 1-carboxyvinyltransferase from Mycobacterium tuberculosis (strain ATCC 25177 / H37Ra).